The sequence spans 108 residues: MSDSNSRLVYSTETGRIDEPKAAPVRPKGDGVVRIQRQTSGRKGKGVCLITGVDLDDAELTKLAAELKKKCGCGGAVKDGVIEIQGDKRDLLKSLLEAKGMKVKLAGG.

The span at 1 to 14 (MSDSNSRLVYSTET) shows a compositional bias: polar residues. Residues 1–31 (MSDSNSRLVYSTETGRIDEPKAAPVRPKGDG) are disordered. Over residues 15–31 (GRIDEPKAAPVRPKGDG) the composition is skewed to basic and acidic residues.

The protein belongs to the SUI1 family.

This is an uncharacterized protein from Escherichia coli (strain K12).